Consider the following 942-residue polypeptide: Protein inturned (942 aa).

Disordered stretches follow at residues 1 to 56 (MAGL…PEWL) and 128 to 156 (LPRR…KTGV). Residues 22-32 (SQEEEEEEGDS) are compositionally biased toward acidic residues. Residues 33-48 (DAGASSLGSYSSASSD) show a composition bias toward low complexity. Residues 137 to 156 (SSNNGPVSILKHQSSQKTGV) show a composition bias toward polar residues. The region spanning 185–267 (LLEVLVGIIH…PMQVKLTFEN (83 aa)) is the PDZ domain. Phosphoserine occurs at positions 674 and 678. Residues 707 to 751 (KARKPSPSRIGGGREPTEGEESAGLSPHATPDAVRKQRESEGSDD) are disordered.

The protein belongs to the inturned family. In terms of assembly, component of the CPLANE (ciliogenesis and planar polarity effectors) complex, composed of INTU, FUZ and WDPCP. Interacts with CPLANE1. Interacts with NPHP4 and DAAM1; INTU is mediating the interaction between NPHP4 and DAAM1. As to expression, widely expressed in E8.5 and E9.5 wild type embryos. Present in various adult organs (at protein level).

The protein localises to the cytoplasm. Its subcellular location is the cell surface. The protein resides in the cytoskeleton. It localises to the cilium basal body. It is found in the microtubule organizing center. The protein localises to the centrosome. Its subcellular location is the centriole. In terms of biological role, plays a key role in ciliogenesis and embryonic development. Regulator of cilia formation by controlling the organization of the apical actin cytoskeleton and the positioning of the basal bodies at the apical cell surface, which in turn is essential for the normal orientation of elongating ciliary microtubules. Plays a key role in definition of cell polarity via its role in ciliogenesis but not via conversion extension. Has an indirect effect on hedgehog signaling. Proposed to function as core component of the CPLANE (ciliogenesis and planar polarity effectors) complex involved in the recruitment of peripheral IFT-A proteins to basal bodies. Required for recruitment of CPLANE2 to the mother centriole. Binds phosphatidylinositol 3-phosphate with highest affinity, followed by phosphatidylinositol 4-phosphate and phosphatidylinositol 5-phosphate. The polypeptide is Protein inturned (Intu) (Mus musculus (Mouse)).